A 1129-amino-acid polypeptide reads, in one-letter code: CRISPR-associated endonuclease Cas12b (1129 aa).

The tract at residues 1-14 (MAVKSIKVKLRLDD) is WED-I (OBD-I) domain. Residues 4-9 (KSIKVK) are binds sgRNA. The interval 15–386 (MPEIRAGLWK…FATFTLPDAT (372 aa)) is REC1 (Helical-1)domain. Binds DNA protospacer adjacent motif (PAM) on target DNA regions lie at residues 118 to 122 (QQIAR) and 143 to 144 (GN). Residues 387 to 518 (AHPIWTRFDK…QSQSEARGER (132 aa)) form a WED-II (OBD-II) domain region. The segment at 442–446 (SMSEQ) is binds sgRNA. A ruvC-I domain region spans residues 519 to 628 (RPPYAAVFRL…LLKLPGETES (110 aa)). The active-site For DNase activity of RuvC domain is the D570. The tract at residues 573–574 (LR) is binds non-target ssDNA. Residues 629-658 (KDLRAIREERQRTLRQLRTQLAYLRLLVRC) form a bridge helix domain region. The segment at 659-784 (GSEDVGRRER…SFFGKVSGQV (126 aa)) is REC2 (Helical-II) domain. 5 binds sgRNA regions span residues 742 to 746 (RPKIR), 753 to 754 (VG), 792 to 796 (RFAIT), 800 to 819 (HIDH…IIME), and 835 to 839 (WVAKY). The tract at residues 785 to 900 (IRAEKGSRFA…GTMYAAFSSR (116 aa)) is ruvC-II domain. E848 (for DNase activity of RuvC domain) is an active-site residue. The binds non-target ssDNA stretch occupies residues 897 to 900 (FSSR). Phosphate is bound by residues S899 and R911. A nuc-I domain region spans residues 901–974 (FDARTGAPGI…SAEEGDFHQI (74 aa)). The tract at residues 973-978 (QIHADL) is binds sgRNA. Residues 975–993 (HADLNAAQNLQQRLWSDFD) are ruvC-III domain. The active-site For DNase activity of RuvC domain is the D977. Residues 994–1129 (ISQIRLRCDW…DSACENTGDI (136 aa)) are nuc-II domain.

It belongs to the CRISPR-associated endonuclease Cas12b family. As to quaternary structure, monomer. The cofactor is a divalent metal cation.

CRISPR (clustered regularly interspaced short palindromic repeat), is an adaptive immune system that provides protection against mobile genetic elements (viruses, transposable elements and conjugative plasmids). CRISPR clusters contain sequences complementary to antecedent mobile elements and target invading nucleic acids. CRISPR clusters are transcribed and processed into CRISPR RNA (crRNA). In type II CRISPR systems correct processing of pre-crRNA requires a trans-encoded small RNA (tracrRNA), endogenous ribonuclease 3 (rnc) and this protein. The tracrRNA serves as a guide for ribonuclease 3-aided processing of pre-crRNA. Protein-crRNA-tracrRNA endonucleolytically cleave dsDNA target complementary to the spacer; protein is inactive in the absence of crRNA homologous to the target and tracrRNA. Recognizes a short motif in the CRISPR repeat sequences (the 5' PAM or protospacer adjacent motif, TTN in this organism) to help distinguish self versus nonself, as targets within the bacterial CRISPR locus do not have PAMs. PAM recognition is also required for catalytic activity. Cleavage results in staggered 6-8 base 5'-overhangs 14-17 and 23-24 bases downstream of the PAM (protospacer adjacent motif) on the non-target and target strands respectively. Both target and non-target strand DNA are probably independently cleaved in the same active site. In Alicyclobacillus acidoterrestris (strain ATCC 49025 / DSM 3922 / CIP 106132 / NCIMB 13137 / GD3B), this protein is CRISPR-associated endonuclease Cas12b.